Reading from the N-terminus, the 565-residue chain is UvrABC system protein C (565 aa).

Residues 12-89 enclose the GIY-YIG domain; sequence EEPGVYIFKN…IRTHKPKYNV (78 aa). The UVR domain occupies 195–230; that stretch reads KDVLPTLYEKIEQYASNLAFEKAAFLRDQVLVLQNI.

This sequence belongs to the UvrC family. As to quaternary structure, interacts with UvrB in an incision complex.

It localises to the cytoplasm. Functionally, the UvrABC repair system catalyzes the recognition and processing of DNA lesions. UvrC both incises the 5' and 3' sides of the lesion. The N-terminal half is responsible for the 3' incision and the C-terminal half is responsible for the 5' incision. This chain is UvrABC system protein C, found in Hydrogenobaculum sp. (strain Y04AAS1).